A 692-amino-acid chain; its full sequence is ATPase synthesis protein 25, mitochondrial (692 aa).

A mitochondrion-targeting transit peptide spans 1-73 (MNRILSKGPR…DGNGNTHRTT (73 aa)). Disordered stretches follow at residues 44-83 (PRLR…HTPW), 286-314 (RQVS…SSDH), and 338-373 (CRLL…HLAA). The segment covering 65 to 81 (GNGNTHRTTSTASSQHT) has biased composition (polar residues). Over residues 292-302 (TKSDAPHEEVR) the composition is skewed to basic and acidic residues. Positions 347 to 357 (DNQDDGLDDGL) are enriched in acidic residues.

The protein belongs to the ATP25 family.

It localises to the mitochondrion inner membrane. In terms of biological role, probable mitochondrial mRNA stabilization factor. This Neosartorya fischeri (strain ATCC 1020 / DSM 3700 / CBS 544.65 / FGSC A1164 / JCM 1740 / NRRL 181 / WB 181) (Aspergillus fischerianus) protein is ATPase synthesis protein 25, mitochondrial (atp25).